The following is a 437-amino-acid chain: Ribosomal protein uS12 methylthiotransferase RimO (437 aa).

Residues 5–116 (PTISVSHLGC…IAEVIQRVET (112 aa)) form the MTTase N-terminal domain. [4Fe-4S] cluster contacts are provided by cysteine 14, cysteine 50, cysteine 79, cysteine 154, cysteine 158, and cysteine 161. Residues 140–369 (TTNEAVAYLR…MEIQQPIAAK (230 aa)) form the Radical SAM core domain. One can recognise a TRAM domain in the interval 372–437 (QKCVGQTVEV…DVYDLYGKVI (66 aa)).

It belongs to the methylthiotransferase family. RimO subfamily. [4Fe-4S] cluster is required as a cofactor.

The protein resides in the cytoplasm. The catalysed reaction is L-aspartate(89)-[ribosomal protein uS12]-hydrogen + (sulfur carrier)-SH + AH2 + 2 S-adenosyl-L-methionine = 3-methylsulfanyl-L-aspartate(89)-[ribosomal protein uS12]-hydrogen + (sulfur carrier)-H + 5'-deoxyadenosine + L-methionine + A + S-adenosyl-L-homocysteine + 2 H(+). Catalyzes the methylthiolation of an aspartic acid residue of ribosomal protein uS12. This chain is Ribosomal protein uS12 methylthiotransferase RimO, found in Crocosphaera subtropica (strain ATCC 51142 / BH68) (Cyanothece sp. (strain ATCC 51142)).